Here is a 146-residue protein sequence, read N- to C-terminus: Flavodoxin (146 aa).

A Flavodoxin-like domain is found at 4 to 143 (ALIVYGSTTG…EVLDWAREVL (140 aa)).

The protein belongs to the flavodoxin family. FMN serves as cofactor.

Electron-transfer proteins that function in various electron transport systems in microorganisms. Functionally interchangeable with ferredoxin. This is Flavodoxin from Megalodesulfovibrio gigas (strain ATCC 19364 / DSM 1382 / NCIMB 9332 / VKM B-1759) (Desulfovibrio gigas).